The chain runs to 478 residues: Septin-4 (478 aa).

Positions 38–115 (VKDFSGNESC…RSPWGKLDPY (78 aa)) are disordered. Over residues 95-108 (APAPLSPSARPRSP) the composition is skewed to low complexity. Phosphoserine is present on residues serine 117 and serine 118. The region spanning 141–414 (KGFDFTLMVA…ENYRAQCIQS (274 aa)) is the Septin-type G domain. Residues 151–158 (GESGLGKS) form a G1 motif region. GTP is bound by residues 151–158 (GESGLGKS) and threonine 185. A G3 motif region spans residues 208-211 (DTPG). The segment at 289-292 (AKAD) is G4 motif. 290-298 (KADTLTPPE) contributes to the GTP binding site. Phosphoserine is present on serine 325. Residues glycine 348 and arginine 363 each coordinate GTP. A disordered region spans residues 425 to 448 (RNKLTRESGTDLPIPAVPPGTDPE). The residue at position 432 (serine 432) is a Phosphoserine. Residue threonine 434 is modified to Phosphothreonine. Residues 446-478 (DPETEKLIREKDEELRRMQEMLHKIQKQMKETY) are a coiled coil.

The protein belongs to the TRAFAC class TrmE-Era-EngA-EngB-Septin-like GTPase superfamily. Septin GTPase family. In terms of assembly, septins polymerize into heterooligomeric protein complexes that form filaments, and can associate with cellular membranes, actin filaments and microtubules. GTPase activity is required for filament formation. Interacts with SEPTIN8. Component of a septin core octameric complex consisting of SEPTIN12, SEPTIN7, SEPTIN6 and SEPTIN2 or SEPTIN4 in the order 12-7-6-2-2-6-7-12 or 12-7-6-4-4-6-7-12. Interacts with SEPTIN14 (via C-terminus). Interacts with DYRK1A. Interacts with SLC6A3/DAT and SNCA/alpha-synuclein. Interacts with STX1A; in the striatum. Interacts with XIAP (via BIR3 domain) following the induction of apoptosis. Interacts with AREL1 (via HECT domain); in the cytoplasm following induction of apoptosis. In terms of processing, ubiquitinated by AREL1. Post-translationally, phosphorylated by DYRK1A.

It localises to the cytoplasm. The protein localises to the cell projection. Its subcellular location is the cilium. It is found in the flagellum. The protein resides in the cytoplasmic vesicle. It localises to the secretory vesicle. The protein localises to the axon. Its subcellular location is the dendrite. It is found in the perikaryon. The protein resides in the synapse. Its function is as follows. Filament-forming cytoskeletal GTPase. Pro-apoptotic protein involved in LGR5-positive intestinal stem cell and Paneth cell expansion in the intestines, via its interaction with XIAP. May also play a role in the regulation of cell fate in the intestine. Positive regulator of apoptosis involved in hematopoietic stem cell homeostasis; via its interaction with XIAP. Negative regulator of repair and hair follicle regeneration in response to injury, due to inhibition of hair follicle stem cell proliferation, potentially via its interaction with XIAP. Plays an important role in male fertility and sperm motility. During spermiogenesis, essential for the establishment of the annulus (a fibrous ring structure connecting the midpiece and the principal piece of the sperm flagellum) which is a requisite for the structural and mechanical integrity of the sperm. Involved in the migration of cortical neurons and the formation of neuron leading processes during embryonic development. Required for dopaminergic metabolism in presynaptic autoreceptors; potentially via activity as a presynaptic scaffold protein. The sequence is that of Septin-4 from Pongo abelii (Sumatran orangutan).